A 502-amino-acid chain; its full sequence is Zinc finger C3HC-type protein 1 (502 aa).

The residue at position 2 (Ala2) is an N-acetylalanine. Ser24 is subject to Phosphoserine. Phosphothreonine is present on Thr28. Positions 35–74 (LIDEGIAPEEGGVDAQDTSATSQSVNGSPQAEQPSLESTS) are disordered. Residues 50–72 (QDTSATSQSVNGSPQAEQPSLES) are compositionally biased toward polar residues. 2 positions are modified to phosphoserine: Ser58 and Ser62. Phosphothreonine is present on Thr84. The C3HC-type zinc finger occupies 102-156 (CAKYGWVTVECDMLKCSSCQAFLCASLQPAFDFDRYKQRCAELKKALCTAHEKFC). Residues 302–423 (SSPIPGLEGR…SSRSFFDPTS (122 aa)) are disordered. A phosphoserine mark is found at Ser321 and Ser329. A Phosphothreonine modification is found at Thr333. Residues Ser338, Ser344, Ser354, Ser359, and Ser370 each carry the phosphoserine modification. Positions 351-360 (RTRSWDSSSP) are enriched in polar residues. The segment covering 371–380 (PTTRTRPVTR) has biased composition (low complexity). Ser381 bears the Phosphoserine mark. The residue at position 384 (Thr384) is a Phosphothreonine. Residue Ser395 is modified to Phosphoserine. Residues 396–402 (PLRKAKR) carry the Nuclear localization signal motif. Phosphoserine is present on residues Ser407 and Ser483. Residues 407–422 (SSSSSDTSSRSFFDPT) are compositionally biased toward low complexity.

Interacts with TPR; this interaction mediates ZC3HC1 nuclear envelopes (NE)-association but also required for proper positioning of a substantial amount of TPR at the nuclear basket (NB). In terms of processing, phosphorylated. May also be weakly phosphorylated on Tyr residues.

Its subcellular location is the nucleus. The protein resides in the nucleus envelope. In terms of biological role, required for proper positioning of a substantial amount of TPR at the nuclear basket (NB) through interaction with TPR. The sequence is that of Zinc finger C3HC-type protein 1 (ZC3HC1) from Pongo abelii (Sumatran orangutan).